Consider the following 229-residue polypeptide: 3-isopropylmalate dehydratase small subunit (229 aa).

The tract at residues 198–229 is disordered; sequence LPVKREPEQPIESAREGEYPDWQGPLADRGII. The span at 200–215 shows a compositional bias: basic and acidic residues; it reads VKREPEQPIESAREGE.

The protein belongs to the LeuD family. LeuD type 1 subfamily. Heterodimer of LeuC and LeuD.

The enzyme catalyses (2R,3S)-3-isopropylmalate = (2S)-2-isopropylmalate. The protein operates within amino-acid biosynthesis; L-leucine biosynthesis; L-leucine from 3-methyl-2-oxobutanoate: step 2/4. In terms of biological role, catalyzes the isomerization between 2-isopropylmalate and 3-isopropylmalate, via the formation of 2-isopropylmaleate. The chain is 3-isopropylmalate dehydratase small subunit from Bifidobacterium adolescentis (strain ATCC 15703 / DSM 20083 / NCTC 11814 / E194a).